A 186-amino-acid polypeptide reads, in one-letter code: MSEPASISSGIAARYAAAVFELAKDEGALPALEKDMDALGAAWAESADLRDLATSPVYAREDQQKAIAAIAAKMGLSSLTSNTLALMGSKRRLFVLPQMVADVQNRIATEKGEITAEVTAAAPLSPEQAARLAATLKARAGKDVKLKTTVDESLIGGLVVKLGSSMIDTSVKARLAALQNAMKEVG.

The protein belongs to the ATPase delta chain family. As to quaternary structure, F-type ATPases have 2 components, F(1) - the catalytic core - and F(0) - the membrane proton channel. F(1) has five subunits: alpha(3), beta(3), gamma(1), delta(1), epsilon(1). CF(0) has four main subunits: a(1), b(1), b'(1) and c(10-14). The alpha and beta chains form an alternating ring which encloses part of the gamma chain. F(1) is attached to F(0) by a central stalk formed by the gamma and epsilon chains, while a peripheral stalk is formed by the delta, b and b' chains.

The protein localises to the cell inner membrane. F(1)F(0) ATP synthase produces ATP from ADP in the presence of a proton or sodium gradient. F-type ATPases consist of two structural domains, F(1) containing the extramembraneous catalytic core and F(0) containing the membrane proton channel, linked together by a central stalk and a peripheral stalk. During catalysis, ATP synthesis in the catalytic domain of F(1) is coupled via a rotary mechanism of the central stalk subunits to proton translocation. In terms of biological role, this protein is part of the stalk that links CF(0) to CF(1). It either transmits conformational changes from CF(0) to CF(1) or is implicated in proton conduction. This is ATP synthase subunit delta from Cereibacter sphaeroides (strain ATCC 17025 / ATH 2.4.3) (Rhodobacter sphaeroides).